We begin with the raw amino-acid sequence, 323 residues long: Beta-ketoacyl-[acyl-carrier-protein] synthase III (323 aa).

Residues Cys-114 and His-250 contribute to the active site. The segment at 251–255 (QANIR) is ACP-binding. The active site involves Asn-280.

The protein belongs to the thiolase-like superfamily. FabH family. In terms of assembly, homodimer.

The protein resides in the cytoplasm. It catalyses the reaction malonyl-[ACP] + acetyl-CoA + H(+) = 3-oxobutanoyl-[ACP] + CO2 + CoA. It functions in the pathway lipid metabolism; fatty acid biosynthesis. In terms of biological role, catalyzes the condensation reaction of fatty acid synthesis by the addition to an acyl acceptor of two carbons from malonyl-ACP. Catalyzes the first condensation reaction which initiates fatty acid synthesis and may therefore play a role in governing the total rate of fatty acid production. Possesses both acetoacetyl-ACP synthase and acetyl transacylase activities. Its substrate specificity determines the biosynthesis of branched-chain and/or straight-chain of fatty acids. This Roseobacter denitrificans (strain ATCC 33942 / OCh 114) (Erythrobacter sp. (strain OCh 114)) protein is Beta-ketoacyl-[acyl-carrier-protein] synthase III.